The following is a 225-amino-acid chain: Thylakoid lumenal 17.9 kDa protein, chloroplastic (225 aa).

The protein resides in the plastid. It is found in the chloroplast thylakoid lumen. This chain is Thylakoid lumenal 17.9 kDa protein, chloroplastic, found in Arabidopsis thaliana (Mouse-ear cress).